The following is a 371-amino-acid chain: 4-hydroxy-3-methylbut-2-en-1-yl diphosphate synthase (flavodoxin) (371 aa).

4 residues coordinate [4Fe-4S] cluster: Cys270, Cys273, Cys305, and Glu312.

The protein belongs to the IspG family. [4Fe-4S] cluster is required as a cofactor.

It catalyses the reaction (2E)-4-hydroxy-3-methylbut-2-enyl diphosphate + oxidized [flavodoxin] + H2O + 2 H(+) = 2-C-methyl-D-erythritol 2,4-cyclic diphosphate + reduced [flavodoxin]. It participates in isoprenoid biosynthesis; isopentenyl diphosphate biosynthesis via DXP pathway; isopentenyl diphosphate from 1-deoxy-D-xylulose 5-phosphate: step 5/6. Its function is as follows. Converts 2C-methyl-D-erythritol 2,4-cyclodiphosphate (ME-2,4cPP) into 1-hydroxy-2-methyl-2-(E)-butenyl 4-diphosphate. The polypeptide is 4-hydroxy-3-methylbut-2-en-1-yl diphosphate synthase (flavodoxin) (Shewanella denitrificans (strain OS217 / ATCC BAA-1090 / DSM 15013)).